A 252-amino-acid polypeptide reads, in one-letter code: Type IV pilus assembly protein PilF (252 aa).

The signal sequence occupies residues 1-17 (MTVRAALVFLLAVGLTG). Cys18 carries N-palmitoyl cysteine lipidation. A lipid anchor (S-diacylglycerol cysteine) is attached at Cys18. 6 TPR repeats span residues 32–67 (GRDE…LEID), 84–101 (EMEP…LASD), 104–133 (NARV…EASQ), 139–171 (ERSR…LRLN), 174–203 (QPSV…LFAQ), and 208–235 (NARS…GLQL).

Interacts with PilQ; this interaction is essential for assemby of PilQ into secretins.

The protein resides in the cell outer membrane. In terms of biological role, essential component of the type IV pilus (T4P) that plays a role in surface and host cell adhesion, colonization, biofilm maturation, virulence, and twitching, a form of surface-associated motility facilitated by cycles of extension, adhesion, and retraction of T4P fibers. Plays an essential role in the outer membrane localization and assembly of PilQ into secretins which are dodecamers of PilQ. This Pseudomonas aeruginosa (strain ATCC 15692 / DSM 22644 / CIP 104116 / JCM 14847 / LMG 12228 / 1C / PRS 101 / PAO1) protein is Type IV pilus assembly protein PilF (pilF).